Reading from the N-terminus, the 147-residue chain is Large ribosomal subunit protein uL15 (147 aa).

Residues 1-13 (MELHSLKAAEGSR) show a composition bias toward basic and acidic residues. Residues 1-57 (MELHSLKAAEGSRKVRNRVGRGTSSGNGKTSGRGQKGQKSRSGGGVRPGFEGGQTEL) form a disordered region. Composition is skewed to gly residues over residues 23–35 (TSSG…GRGQ) and 42–52 (SGGGVRPGFEG).

This sequence belongs to the universal ribosomal protein uL15 family. As to quaternary structure, part of the 50S ribosomal subunit.

Its function is as follows. Binds to the 23S rRNA. This Lactococcus lactis subsp. lactis (strain IL1403) (Streptococcus lactis) protein is Large ribosomal subunit protein uL15.